The primary structure comprises 31 residues: Photosystem II reaction center protein T (31 aa).

A helical membrane pass occupies residues 3-23 (SAAYILVLALALGVIFFAIAF).

The protein belongs to the PsbT family. PSII is composed of 1 copy each of membrane proteins PsbA, PsbB, PsbC, PsbD, PsbE, PsbF, PsbH, PsbI, PsbJ, PsbK, PsbL, PsbM, PsbT, PsbX, PsbY, PsbZ, Psb30/Ycf12, peripheral proteins PsbO, CyanoQ (PsbQ), PsbU, PsbV and a large number of cofactors. It forms dimeric complexes.

It localises to the cellular thylakoid membrane. In terms of biological role, found at the monomer-monomer interface of the photosystem II (PS II) dimer, plays a role in assembly and dimerization of PSII. PSII is a light-driven water plastoquinone oxidoreductase, using light energy to abstract electrons from H(2)O, generating a proton gradient subsequently used for ATP formation. The polypeptide is Photosystem II reaction center protein T (Trichodesmium erythraeum (strain IMS101)).